A 242-amino-acid polypeptide reads, in one-letter code: Peroxisomal membrane protein 11-3 (242 aa).

Residues 1–22 form a disordered region; sequence MAAAAAAAGSSDSRKPAAHPPP. The Cytoplasmic portion of the chain corresponds to 1–102; that stretch reads MAAAAAAAGS…LRAHPHPPPA (102 aa). Residues 103-123 form a helical membrane-spanning segment; the sequence is VALLAYGGEGVYYFLEQFVWL. Residues 124–214 are Lumenal-facing; that stretch reads AKAGLLPAHL…MALGDVTDGK (91 aa). The chain crosses the membrane as a helical span at residues 215 to 235; the sequence is GLLGSSTLMASAGLLSALISA. Over 236 to 242 the chain is Cytoplasmic; it reads HKNWNSC.

This sequence belongs to the peroxin-11 family. As to expression, expressed in seedlings, roots, leaf sheaths, spikelets and endosperm.

Its subcellular location is the peroxisome membrane. In terms of biological role, involved in peroxisomal proliferation. In Oryza sativa subsp. japonica (Rice), this protein is Peroxisomal membrane protein 11-3 (PEX11-3).